We begin with the raw amino-acid sequence, 251 residues long: Malonyl-[acyl-carrier protein] O-methyltransferase (251 aa).

It belongs to the methyltransferase superfamily.

The enzyme catalyses malonyl-[ACP] + S-adenosyl-L-methionine = malonyl-[ACP] methyl ester + S-adenosyl-L-homocysteine. The protein operates within cofactor biosynthesis; biotin biosynthesis. Functionally, converts the free carboxyl group of a malonyl-thioester to its methyl ester by transfer of a methyl group from S-adenosyl-L-methionine (SAM). It allows to synthesize pimeloyl-ACP via the fatty acid synthetic pathway. The protein is Malonyl-[acyl-carrier protein] O-methyltransferase of Salmonella typhimurium (strain LT2 / SGSC1412 / ATCC 700720).